A 209-amino-acid chain; its full sequence is Uracil phosphoribosyltransferase (209 aa).

Residues arginine 79, arginine 104, and 131-139 (DPMLATGGS) contribute to the 5-phospho-alpha-D-ribose 1-diphosphate site. Uracil contacts are provided by residues isoleucine 194 and 199-201 (GDA). Residue aspartate 200 participates in 5-phospho-alpha-D-ribose 1-diphosphate binding.

It belongs to the UPRTase family. The cofactor is Mg(2+).

It carries out the reaction UMP + diphosphate = 5-phospho-alpha-D-ribose 1-diphosphate + uracil. The protein operates within pyrimidine metabolism; UMP biosynthesis via salvage pathway; UMP from uracil: step 1/1. With respect to regulation, allosterically activated by GTP. In terms of biological role, catalyzes the conversion of uracil and 5-phospho-alpha-D-ribose 1-diphosphate (PRPP) to UMP and diphosphate. This Halalkalibacterium halodurans (strain ATCC BAA-125 / DSM 18197 / FERM 7344 / JCM 9153 / C-125) (Bacillus halodurans) protein is Uracil phosphoribosyltransferase.